The chain runs to 917 residues: MQAKATDSRQEPTLNMDTNARRNFIKFHAKLGEKPATTVRFFDHTDRYTVHGSDDCELVAKIVYKSTAFIGALLPDDKKETLQFVSMSKGNFELAVRELLLVRNYRVEVYVKNSSDWEIEYRGSPGNLLQFEDILFSNKEVLVGNSIISLLVKLDGGGQRRVGVASVEQNDCKFQLLEFLDDDFFTELEATVVLLGPKECLLPSIEGEYSAVKTLLDRNGVMITMPKKSGDNDLLQDLNRLLRFAKGQQEDATGLKELQLQLASNALKTAIKYLDLVNDAGNLGHYEIKQLDLNRFVHLDSAAVAALNIMPKPGTHPSMPSYRWQSVLGVLDHCRTPQGHRLMGQWVKQPLRSRNILNDRHNIVQCLLESPDTMETLSLDYLKRIPDILMLTKKLMRRKANLQDLFRIYQVILRTPKILKVLHELDNSTIESVICAPFKSFLKDLTGLKQMVEQVVDFEAIERGEYLVKASFDSRLMELQQMMTELYSKMEELQFKCSQELNLDGKNQVKLESVAKLGHHFRITVKDDSVLRKNKNYRIVDVIKGGVRFTSDKLEGYADEFASCRTRYEEQQLSIVEEIIHVAVGYAAPLTLLNNELAQLDCLVSFAIAARSAPTPYVRPKMLEEGARELVLEDVRHPCLELQEHVNFIANSVDFKKEECNMFIITGPNMGGKSTYIRSVGTAVLMAHIGAFVPCSLATISMVDSILGRVGASDNIIKGLSTFMVEMIETSGIIRTATDKSLVIIDELGRGTSTYEGCGIAWSIAEHLAKETKCFTLFATHFHEITKLAETLSTVKNCHMAAVADADDFTLLYQVRSGVMEKSFGIQVARLANFPEHVVQNAQEVYNEFEDEHVDKQKKEDKALLEKIQVAIQQLSTAGNNVDINVEDLTQLVTQFTKDIEQLDSDYFKSVLATSEA.

667–674 (GPNMGGKS) is an ATP binding site.

It belongs to the DNA mismatch repair MutS family. As to quaternary structure, heterodimer of Msh2/Spel and Msh6.

Its subcellular location is the nucleus. In terms of biological role, involved in postreplication mismatch repair. Binds specifically to DNA containing mismatched nucleotides thus providing a target for the excision repair processes characteristic of postreplication mismatch repair. In Drosophila melanogaster (Fruit fly), this protein is DNA mismatch repair protein spellchecker 1 (spel1).